Here is a 160-residue protein sequence, read N- to C-terminus: NADH-quinone oxidoreductase subunit B (160 aa).

[4Fe-4S] cluster contacts are provided by cysteine 37, cysteine 38, cysteine 102, and cysteine 132.

Belongs to the complex I 20 kDa subunit family. In terms of assembly, NDH-1 is composed of 14 different subunits. Subunits NuoB, C, D, E, F, and G constitute the peripheral sector of the complex. [4Fe-4S] cluster serves as cofactor.

The protein resides in the cell inner membrane. The enzyme catalyses a quinone + NADH + 5 H(+)(in) = a quinol + NAD(+) + 4 H(+)(out). NDH-1 shuttles electrons from NADH, via FMN and iron-sulfur (Fe-S) centers, to quinones in the respiratory chain. Couples the redox reaction to proton translocation (for every two electrons transferred, four hydrogen ions are translocated across the cytoplasmic membrane), and thus conserves the redox energy in a proton gradient. This chain is NADH-quinone oxidoreductase subunit B, found in Neisseria gonorrhoeae (strain NCCP11945).